The sequence spans 63 residues: MAAATLTSKLYSLLFRRTSTFALTIIVGVMFFERAFDQGADAIYDHINEGKLWKHIKHKYENK.

The Mitochondrial matrix portion of the chain corresponds to 2–21 (AAATLTSKLYSLLFRRTSTF). A helical membrane pass occupies residues 22-47 (ALTIIVGVMFFERAFDQGADAIYDHI). Residues 48–63 (NEGKLWKHIKHKYENK) lie on the Mitochondrial intermembrane side of the membrane.

It belongs to the UQCR10/QCR9 family. As to quaternary structure, component of the ubiquinol-cytochrome c oxidoreductase (cytochrome b-c1 complex, complex III, CIII), a multisubunit enzyme composed of 11 subunits. The complex is composed of 3 respiratory subunits cytochrome b, cytochrome c1 and Rieske protein UQCRFS1, 2 core protein subunits UQCRC1/QCR1 and UQCRC2/QCR2, and 6 low-molecular weight protein subunits UQCRH/QCR6, UQCRB/QCR7, UQCRQ/QCR8, UQCR10/QCR9, UQCR11/QCR10 and subunit 9, the cleavage product of Rieske protein UQCRFS1. The complex exists as an obligatory dimer and forms supercomplexes (SCs) in the inner mitochondrial membrane with NADH-ubiquinone oxidoreductase (complex I, CI) and cytochrome c oxidase (complex IV, CIV), resulting in different assemblies (supercomplex SCI(1)III(2)IV(1) and megacomplex MCI(2)III(2)IV(2)). Interacts with STMP1.

It localises to the mitochondrion inner membrane. In terms of biological role, component of the ubiquinol-cytochrome c oxidoreductase, a multisubunit transmembrane complex that is part of the mitochondrial electron transport chain which drives oxidative phosphorylation. The respiratory chain contains 3 multisubunit complexes succinate dehydrogenase (complex II, CII), ubiquinol-cytochrome c oxidoreductase (cytochrome b-c1 complex, complex III, CIII) and cytochrome c oxidase (complex IV, CIV), that cooperate to transfer electrons derived from NADH and succinate to molecular oxygen, creating an electrochemical gradient over the inner membrane that drives transmembrane transport and the ATP synthase. The cytochrome b-c1 complex catalyzes electron transfer from ubiquinol to cytochrome c, linking this redox reaction to translocation of protons across the mitochondrial inner membrane, with protons being carried across the membrane as hydrogens on the quinol. In the process called Q cycle, 2 protons are consumed from the matrix, 4 protons are released into the intermembrane space and 2 electrons are passed to cytochrome c. The polypeptide is Cytochrome b-c1 complex subunit 9 (UQCR10) (Homo sapiens (Human)).